A 274-amino-acid chain; its full sequence is Thiamine kinase (274 aa).

It belongs to the thiamine kinase family.

The enzyme catalyses thiamine + ATP = thiamine phosphate + ADP + H(+). The protein operates within cofactor biosynthesis; thiamine diphosphate biosynthesis; thiamine phosphate from thiamine: step 1/1. In terms of biological role, catalyzes the ATP-dependent phosphorylation of thiamine to thiamine phosphate. Is involved in thiamine salvage. In Escherichia coli (strain K12 / MC4100 / BW2952), this protein is Thiamine kinase.